The following is a 190-amino-acid chain: Interferon alpha-11 (190 aa).

Residues 1–23 form the signal peptide; the sequence is MARLCAFLMILIVMSYWSTCSLG. 2 disulfides stabilise this stretch: C24–C122 and C52–C162. Residue N101 is glycosylated (N-linked (GlcNAc...) asparagine).

The protein belongs to the alpha/beta interferon family. Post-translationally, N-glycosylated.

The protein resides in the secreted. Its function is as follows. Has antiviral and antiproliferative activities. Produced by macrophages and stimulates the production of two enzymes: a protein kinase and an oligoadenylate synthetase. During viral infection, mediates antiviral effect, either directly by inducing interferon-stimulated genes, either indirectly through stimulation of natural killer cells enabling them to control viral replication. The polypeptide is Interferon alpha-11 (Ifna11) (Mus musculus (Mouse)).